A 551-amino-acid chain; its full sequence is Prunin 1 Pru du 6.0101 (551 aa).

An N-terminal signal peptide occupies residues 1-20 (MAKAFVFSLCLLLVFNGCLA). Disulfide bonds link Cys32/Cys65 and Cys108/Cys374. The Cupin type-1 1 domain maps to 37-312 (LQAREPDNRI…ALNVNEETAR (276 aa)). Disordered regions lie at residues 111 to 194 (TFEE…QKTR), 238 to 293 (NPRK…NVFS), and 311 to 361 (ARNL…QQQG). 3 stretches are compositionally biased toward low complexity: residues 114–124 (ESQQSSQQGRQ), 132–148 (QQQQ…QQEQ), and 168–185 (QEQQ…QQFR). 4 igE-binding regions span residues 118 to 132 (SSQQ…QERQ), 145 to 159 (QQEQ…QQGR), 161 to 175 (QQEE…QGQQ), and 225 to 239 (LFHV…DQNP). Residues 254–275 (QQGQSQPRQQGEQGRPGQHQQP) show a composition bias toward low complexity. Positions 281 to 295 (QQEQQGSGNNVFSGF) are igE-binding. 2 stretches are compositionally biased toward polar residues: residues 282–293 (QEQQGSGNNVFS) and 311–323 (ARNL…NRNQ). Positions 339–350 (GRQEREHEERQQ) are enriched in basic and acidic residues. Residues 351 to 361 (EQLQQERQQQG) are compositionally biased toward low complexity. Residues 367 to 372 (NGLEET) carry the NGXEET; peptidase recognition motif motif. The region spanning 380 to 529 (ENIGNPERAD…AYQISREQAR (150 aa)) is the Cupin type-1 2 domain. Positions 510–524 (RALPDEVLANAYQIS) are igE-binding.

The protein belongs to the 11S seed storage protein (globulins) family. As to quaternary structure, hexamer of two trimers; each subunit is composed of an acidic and a basic chain derived from a single precursor and linked by a disulfide bond. Post-translationally, proteolytically processed from a single precursor to produce an acidic and a basic chain that are linked by a disulfide bond. In terms of tissue distribution, expressed in seed (at protein level).

Its function is as follows. Seed storage protein. This is Prunin 1 Pru du 6.0101 from Prunus dulcis (Almond).